The sequence spans 581 residues: Proline--tRNA ligase (581 aa).

It belongs to the class-II aminoacyl-tRNA synthetase family. ProS type 1 subfamily. Homodimer.

It localises to the cytoplasm. It catalyses the reaction tRNA(Pro) + L-proline + ATP = L-prolyl-tRNA(Pro) + AMP + diphosphate. Catalyzes the attachment of proline to tRNA(Pro) in a two-step reaction: proline is first activated by ATP to form Pro-AMP and then transferred to the acceptor end of tRNA(Pro). As ProRS can inadvertently accommodate and process non-cognate amino acids such as alanine and cysteine, to avoid such errors it has two additional distinct editing activities against alanine. One activity is designated as 'pretransfer' editing and involves the tRNA(Pro)-independent hydrolysis of activated Ala-AMP. The other activity is designated 'posttransfer' editing and involves deacylation of mischarged Ala-tRNA(Pro). The misacylated Cys-tRNA(Pro) is not edited by ProRS. The sequence is that of Proline--tRNA ligase from Rhodococcus erythropolis (strain PR4 / NBRC 100887).